The sequence spans 390 residues: Putative RING-H2 finger protein ATL12 (390 aa).

An N-terminal signal peptide occupies residues 1–22; the sequence is MNSPQEISILFFFIIFLDYVSA. The helical transmembrane segment at 41 to 61 threads the bilayer; the sequence is LAIITGVFSIVFTLTFVLLVY. Residues 124-166 form an RING-type; atypical zinc finger; that stretch reads CSVCLSKFEDVEILRLLPKCRHAFHIGCIDQWLEQHATCPLCR.

It belongs to the RING-type zinc finger family. ATL subfamily.

The protein resides in the membrane. The catalysed reaction is S-ubiquitinyl-[E2 ubiquitin-conjugating enzyme]-L-cysteine + [acceptor protein]-L-lysine = [E2 ubiquitin-conjugating enzyme]-L-cysteine + N(6)-ubiquitinyl-[acceptor protein]-L-lysine.. Its pathway is protein modification; protein ubiquitination. In Arabidopsis thaliana (Mouse-ear cress), this protein is Putative RING-H2 finger protein ATL12 (ATL12).